The chain runs to 292 residues: 4-diphosphocytidyl-2-C-methyl-D-erythritol kinase (292 aa).

The active site involves Lys-10. 94–104 (PVAAGLAGGSS) provides a ligand contact to ATP. Asp-136 is a catalytic residue.

This sequence belongs to the GHMP kinase family. IspE subfamily.

The catalysed reaction is 4-CDP-2-C-methyl-D-erythritol + ATP = 4-CDP-2-C-methyl-D-erythritol 2-phosphate + ADP + H(+). It functions in the pathway isoprenoid biosynthesis; isopentenyl diphosphate biosynthesis via DXP pathway; isopentenyl diphosphate from 1-deoxy-D-xylulose 5-phosphate: step 3/6. In terms of biological role, catalyzes the phosphorylation of the position 2 hydroxy group of 4-diphosphocytidyl-2C-methyl-D-erythritol. The chain is 4-diphosphocytidyl-2-C-methyl-D-erythritol kinase from Brevibacillus brevis (strain 47 / JCM 6285 / NBRC 100599).